Here is a 99-residue protein sequence, read N- to C-terminus: Transmembrane protein 14A (99 aa).

The next 3 membrane-spanning stretches (helical) occupy residues 1-21 (MDLIGFGYAALVTFGSILGYK), 24-44 (GGVPSLIAGLFVGFLAGYGAY), and 79-99 (PAGLVAGLSLLMILRLVLLLL).

Belongs to the TMEM14 family.

It localises to the mitochondrion membrane. It is found in the endoplasmic reticulum membrane. In terms of biological role, inhibits apoptosis via negative regulation of the mitochondrial outer membrane permeabilization involved in apoptotic signaling pathway. This chain is Transmembrane protein 14A (TMEM14A), found in Sus scrofa (Pig).